Reading from the N-terminus, the 228-residue chain is PKHD-type hydroxylase YbiX (228 aa).

The 100-residue stretch at 78-177 (TLSTPLFNRY…RVASFIWIQS (100 aa)) folds into the Fe2OG dioxygenase domain. Residues His96, Asp98, and His158 each contribute to the Fe cation site. Residue Arg168 participates in 2-oxoglutarate binding.

Fe(2+) is required as a cofactor. It depends on L-ascorbate as a cofactor.

This is PKHD-type hydroxylase YbiX from Escherichia coli O157:H7.